A 301-amino-acid polypeptide reads, in one-letter code: Glycerol-3-phosphate dehydrogenase [NAD(P)+] (301 aa).

Positions 13, 33, and 78 each coordinate NADPH. Residues Lys78 and Gly106 each coordinate sn-glycerol 3-phosphate. Ala110 contacts NADPH. Positions 161, 214, 224, 225, and 226 each coordinate sn-glycerol 3-phosphate. Lys161 serves as the catalytic Proton acceptor. Residue Arg225 participates in NADPH binding. Glu251 is a binding site for NADPH.

Belongs to the NAD-dependent glycerol-3-phosphate dehydrogenase family.

The protein localises to the cytoplasm. The catalysed reaction is sn-glycerol 3-phosphate + NAD(+) = dihydroxyacetone phosphate + NADH + H(+). The enzyme catalyses sn-glycerol 3-phosphate + NADP(+) = dihydroxyacetone phosphate + NADPH + H(+). The protein operates within membrane lipid metabolism; glycerophospholipid metabolism. Catalyzes the reduction of the glycolytic intermediate dihydroxyacetone phosphate (DHAP) to sn-glycerol 3-phosphate (G3P), the key precursor for phospholipid synthesis. This Synechococcus sp. (strain RCC307) protein is Glycerol-3-phosphate dehydrogenase [NAD(P)+].